A 464-amino-acid polypeptide reads, in one-letter code: Kynureninase (464 aa).

At Met1 the chain carries N-acetylmethionine. Residues Leu137, Thr138, 165 to 168, Ser221, Asp250, His253, and Tyr275 each bind pyridoxal 5'-phosphate; that span reads FPSD. At Lys276 the chain carries N6-(pyridoxal phosphate)lysine. Pyridoxal 5'-phosphate-binding residues include Trp305 and Asn333.

Belongs to the kynureninase family. As to quaternary structure, homodimer. The cofactor is pyridoxal 5'-phosphate. As to expression, high levels in liver and kidney. Also detected in heart, retina, ovary. Lung, testis and brain.

It localises to the cytoplasm. It is found in the cytosol. It carries out the reaction L-kynurenine + H2O = anthranilate + L-alanine + H(+). The catalysed reaction is 3-hydroxy-L-kynurenine + H2O = 3-hydroxyanthranilate + L-alanine + H(+). It participates in amino-acid degradation; L-kynurenine degradation; L-alanine and anthranilate from L-kynurenine: step 1/1. Its pathway is cofactor biosynthesis; NAD(+) biosynthesis; quinolinate from L-kynurenine: step 2/3. Its activity is regulated as follows. Inhibited by o-methylbenzoylalanine (OMBA). In terms of biological role, catalyzes the cleavage of L-kynurenine (L-Kyn) and L-3-hydroxykynurenine (L-3OHKyn) into anthranilic acid (AA) and 3-hydroxyanthranilic acid (3-OHAA), respectively. Has a preference for the L-3-hydroxy form. Also has cysteine-conjugate-beta-lyase activity. This chain is Kynureninase (Kynu), found in Rattus norvegicus (Rat).